Reading from the N-terminus, the 311-residue chain is 4-hydroxyproline 2-epimerase (311 aa).

Cys89 serves as the catalytic Proton acceptor. Substrate contacts are provided by residues 90-91, His209, and Asp233; that span reads GH. The Proton donor role is filled by Cys237. 238-239 contributes to the substrate binding site; it reads GT.

The protein belongs to the proline racemase family.

The catalysed reaction is trans-4-hydroxy-L-proline = cis-4-hydroxy-D-proline. Functionally, catalyzes the epimerization of trans-4-hydroxy-L-proline (t4LHyp) to cis-4-hydroxy-D-proline (c4DHyp). Is likely involved in a degradation pathway that converts t4LHyp to alpha-ketoglutarate. Displays no proline racemase activity. The protein is 4-hydroxyproline 2-epimerase of Burkholderia ambifaria (strain ATCC BAA-244 / DSM 16087 / CCUG 44356 / LMG 19182 / AMMD) (Burkholderia cepacia (strain AMMD)).